A 283-amino-acid chain; its full sequence is 4-diphosphocytidyl-2-C-methyl-D-erythritol kinase (283 aa).

Residue Lys10 is part of the active site. 99 to 109 provides a ligand contact to ATP; it reads PMGGGLGGGSS. The active site involves Asp141.

It belongs to the GHMP kinase family. IspE subfamily. Homodimer.

It carries out the reaction 4-CDP-2-C-methyl-D-erythritol + ATP = 4-CDP-2-C-methyl-D-erythritol 2-phosphate + ADP + H(+). It functions in the pathway isoprenoid biosynthesis; isopentenyl diphosphate biosynthesis via DXP pathway; isopentenyl diphosphate from 1-deoxy-D-xylulose 5-phosphate: step 3/6. Catalyzes the phosphorylation of the position 2 hydroxy group of 4-diphosphocytidyl-2C-methyl-D-erythritol. In Salmonella arizonae (strain ATCC BAA-731 / CDC346-86 / RSK2980), this protein is 4-diphosphocytidyl-2-C-methyl-D-erythritol kinase.